The sequence spans 310 residues: 300 kDa antigen AG231 (310 aa).

The tract at residues Val1–Cys23 is 4 X 6 AA tandem repeats of V-V-T-G-S-C. The segment at Val29–His106 is 13 X 6 AA tandem repeats of V-V-[TI]-[QE]-E-[PH]. The segment covering Val53–Val101 has biased composition (low complexity). A disordered region spans residues Val53–Lys310. Basic and acidic residues-rich tracts occupy residues Val103–Glu114 and Asn147–Ser160. A 45 AA repeat 1 repeat occupies Ile107–Lys152. Residues Thr176–Ile190 are compositionally biased toward polar residues. The interval Val188–His265 is 13 X 6 AA approximate tandem repeats. A compositionally biased stretch (low complexity) spans Gln191–Pro235. The segment covering Ile236–Gln263 has biased composition (polar residues). The span at Glu264–Glu273 shows a compositional bias: basic and acidic residues. A 45 AA repeat 2 repeat occupies Ala266–Lys310.

This is 300 kDa antigen AG231 (FIRA) from Plasmodium falciparum (isolate FC27 / Papua New Guinea).